Consider the following 268-residue polypeptide: Embryonic abundant protein USP92 (268 aa).

An N-terminal signal peptide occupies residues 1–22; the sequence is MEFAHLTVLSLFCLAFVGITAT. 5 tandem repeats follow at residues 50-55, 83-88, 101-106, 166-183, and 202-222. The 3 X 6 AA approximate repeats stretch occupies residues 50 to 106; that stretch reads GKTNSLPIKSEELKQYSTLFFEHDLHPRKNFILGNTNSVGSIIRPFTKSRQGVTDSI. The BURP domain maps to 68-259; sequence LFFEHDLHPR…GNKAAAWVPN (192 aa). The interval 166 to 222 is 2 X approximate repeats; sequence YVVEDVKKVGDNAVMCHRLNFEKVVFNCHQVRETTAYVVSLVASDGTKTKALTVCHH. N-linked (GlcNAc...) asparagine glycosylation occurs at asparagine 259.

Seed.

The sequence is that of Embryonic abundant protein USP92 from Vicia faba (Broad bean).